The following is a 445-amino-acid chain: Argininosuccinate synthase (445 aa).

ATP contacts are provided by residues alanine 18–serine 26 and alanine 44. Tyrosine 100 is a binding site for L-citrulline. 2 residues coordinate ATP: glycine 130 and threonine 132. 3 residues coordinate L-aspartate: threonine 132, asparagine 136, and aspartate 137. Asparagine 136 contributes to the L-citrulline binding site. An ATP-binding site is contributed by aspartate 137. Positions 140 and 193 each coordinate L-citrulline. Position 195 (aspartate 195) interacts with ATP. L-citrulline is bound by residues threonine 202, glutamate 204, and glutamate 281.

It belongs to the argininosuccinate synthase family. Type 2 subfamily. Homotetramer.

Its subcellular location is the cytoplasm. The enzyme catalyses L-citrulline + L-aspartate + ATP = 2-(N(omega)-L-arginino)succinate + AMP + diphosphate + H(+). The protein operates within amino-acid biosynthesis; L-arginine biosynthesis; L-arginine from L-ornithine and carbamoyl phosphate: step 2/3. The protein is Argininosuccinate synthase (argG) of Pasteurella multocida (strain Pm70).